An 844-amino-acid chain; its full sequence is Receptor-like protein 49 (844 aa).

Residues 1–31 (MMYSCRERRMITVKWSLCLIFCLSNSILVFA) form the signal peptide. At 32–803 (KHLCLPDQRD…QDEEKEEEEQ (772 aa)) the chain is on the extracellular side. N59, N95, N112, and N159 each carry an N-linked (GlcNAc...) asparagine glycan. LRR repeat units follow at residues 102–126 (QHLQ…GLKG), 136–160 (LKYL…LGNL), 161–183 (SYLT…SMGN), 185–208 (NYLR…LGNL), 209–231 (SYLA…SMGN), 242–265 (LNSL…NMSS), 266–290 (LSKL…LFMI), 292–313 (SLVE…NISS), 315–339 (SKLQ…IFSP), 345–362 (YLDV…VSLP), 363–385 (SPIE…LRNQ), 386–409 (TKLY…LWSL), 410–434 (PELQ…VIQG), 436–457 (GELY…LLPV), 458–481 (DSMN…ICEL), 482–504 (DNLV…CFEN), 506–527 (HLYV…EAIS), 528–551 (DRLQ…LINC), 553–574 (ALEF…WLEL), 575–601 (LPNF…SLSF), 602–625 (PRLR…YFAP), 665–689 (FTIY…ISLL), 690–713 (KELI…LSNL), 714–737 (SNLQ…LGEL), and 739–762 (FLAR…QIQT). A glycan (N-linked (GlcNAc...) asparagine) is linked at N207. N262 carries N-linked (GlcNAc...) asparagine glycosylation. N310 carries an N-linked (GlcNAc...) asparagine glycan. 2 N-linked (GlcNAc...) asparagine glycosylation sites follow: N374 and N384. An N-linked (GlcNAc...) asparagine glycan is attached at N416. N-linked (GlcNAc...) asparagine glycosylation is found at N493, N516, and N550. Residues N696 and N712 are each glycosylated (N-linked (GlcNAc...) asparagine). A glycan (N-linked (GlcNAc...) asparagine) is linked at N744. Residues 804–824 (VFSWIAAAIGYVPGVVCGLTI) form a helical membrane-spanning segment. The Cytoplasmic portion of the chain corresponds to 825–844 (GHILVSHKRDWFMRIVSLFT).

The protein belongs to the RLP family.

It localises to the cell membrane. The sequence is that of Receptor-like protein 49 from Arabidopsis thaliana (Mouse-ear cress).